The primary structure comprises 150 residues: MSKYQKKSEAELKRTLTKLQFDVTQNAHTEPPYINEYNRNFEKGIYVDITSGEPLFISTDKFKSGCGWPAFSKPIDKNLIANYRDESHGMIRTEVRAKNSDSHLGHVFNDGPSELGGLRYCINSAALKFIPFEEMEKLGYKDYIHLFKNK.

The region spanning 9–132 is the MsrB domain; that stretch reads EAELKRTLTK…NSAALKFIPF (124 aa). Residue cysteine 121 is the Nucleophile of the active site.

Belongs to the MsrB Met sulfoxide reductase family.

It carries out the reaction L-methionyl-[protein] + [thioredoxin]-disulfide + H2O = L-methionyl-(R)-S-oxide-[protein] + [thioredoxin]-dithiol. The sequence is that of Peptide methionine sulfoxide reductase MsrB from Mycoplasma genitalium (strain ATCC 33530 / DSM 19775 / NCTC 10195 / G37) (Mycoplasmoides genitalium).